The following is a 171-amino-acid chain: Shikimate kinase (171 aa).

ATP is bound at residue 14–19 (GAGKST). Residue Ser-18 participates in Mg(2+) binding. Residues Asp-36, Arg-60, and Gly-82 each coordinate substrate. Position 120 (Arg-120) interacts with ATP. Arg-139 lines the substrate pocket. Gln-156 serves as a coordination point for ATP.

It belongs to the shikimate kinase family. Monomer. It depends on Mg(2+) as a cofactor.

Its subcellular location is the cytoplasm. It catalyses the reaction shikimate + ATP = 3-phosphoshikimate + ADP + H(+). It participates in metabolic intermediate biosynthesis; chorismate biosynthesis; chorismate from D-erythrose 4-phosphate and phosphoenolpyruvate: step 5/7. Its function is as follows. Catalyzes the specific phosphorylation of the 3-hydroxyl group of shikimic acid using ATP as a cosubstrate. This Shewanella loihica (strain ATCC BAA-1088 / PV-4) protein is Shikimate kinase.